Consider the following 128-residue polypeptide: uncharacterized protein (128 aa).

This is an uncharacterized protein from Mycoplasma genitalium (strain ATCC 33530 / DSM 19775 / NCTC 10195 / G37) (Mycoplasmoides genitalium).